The chain runs to 58 residues: uncharacterized protein (58 aa).

Residues 24-44 (LSVYLGLATTIVCIVLFFTML) traverse the membrane as a helical segment.

It localises to the membrane. This is an uncharacterized protein from Haemophilus influenzae (strain ATCC 51907 / DSM 11121 / KW20 / Rd).